The following is a 733-amino-acid chain: Phosphoribosylformylglycinamidine synthase subunit PurL (733 aa).

Residue histidine 41 is part of the active site. Residues tyrosine 44 and lysine 83 each coordinate ATP. Mg(2+) is bound at residue glutamate 85. Substrate is bound by residues 86–89 (SHNH) and arginine 108. The active-site Proton acceptor is histidine 87. Position 109 (aspartate 109) interacts with Mg(2+). The segment at 212–232 (GASFASQELSEESEEKRPSVQ) is disordered. Glutamine 232 serves as a coordination point for substrate. Aspartate 260 provides a ligand contact to Mg(2+). A substrate-binding site is contributed by 304–306 (ESQ). The ATP site is built by aspartate 488 and glycine 525. Residue asparagine 526 participates in Mg(2+) binding. Residue serine 528 coordinates substrate.

It belongs to the FGAMS family. Monomer. Part of the FGAM synthase complex composed of 1 PurL, 1 PurQ and 2 PurS subunits.

It localises to the cytoplasm. It catalyses the reaction N(2)-formyl-N(1)-(5-phospho-beta-D-ribosyl)glycinamide + L-glutamine + ATP + H2O = 2-formamido-N(1)-(5-O-phospho-beta-D-ribosyl)acetamidine + L-glutamate + ADP + phosphate + H(+). It participates in purine metabolism; IMP biosynthesis via de novo pathway; 5-amino-1-(5-phospho-D-ribosyl)imidazole from N(2)-formyl-N(1)-(5-phospho-D-ribosyl)glycinamide: step 1/2. In terms of biological role, part of the phosphoribosylformylglycinamidine synthase complex involved in the purines biosynthetic pathway. Catalyzes the ATP-dependent conversion of formylglycinamide ribonucleotide (FGAR) and glutamine to yield formylglycinamidine ribonucleotide (FGAM) and glutamate. The FGAM synthase complex is composed of three subunits. PurQ produces an ammonia molecule by converting glutamine to glutamate. PurL transfers the ammonia molecule to FGAR to form FGAM in an ATP-dependent manner. PurS interacts with PurQ and PurL and is thought to assist in the transfer of the ammonia molecule from PurQ to PurL. This is Phosphoribosylformylglycinamidine synthase subunit PurL from Thermoanaerobacter pseudethanolicus (strain ATCC 33223 / 39E) (Clostridium thermohydrosulfuricum).